The sequence spans 314 residues: 4-hydroxy-3-methylbut-2-enyl diphosphate reductase (314 aa).

Residue Cys-12 coordinates [4Fe-4S] cluster. (2E)-4-hydroxy-3-methylbut-2-enyl diphosphate contacts are provided by His-41 and His-74. Dimethylallyl diphosphate-binding residues include His-41 and His-74. Isopentenyl diphosphate is bound by residues His-41 and His-74. Position 96 (Cys-96) interacts with [4Fe-4S] cluster. His-124 serves as a coordination point for (2E)-4-hydroxy-3-methylbut-2-enyl diphosphate. His-124 contributes to the dimethylallyl diphosphate binding site. His-124 serves as a coordination point for isopentenyl diphosphate. Glu-126 functions as the Proton donor in the catalytic mechanism. Thr-167 is a binding site for (2E)-4-hydroxy-3-methylbut-2-enyl diphosphate. Cys-197 is a [4Fe-4S] cluster binding site. (2E)-4-hydroxy-3-methylbut-2-enyl diphosphate contacts are provided by Ser-225, Ser-226, Asn-227, and Ser-269. Dimethylallyl diphosphate-binding residues include Ser-225, Ser-226, Asn-227, and Ser-269. Residues Ser-225, Ser-226, Asn-227, and Ser-269 each contribute to the isopentenyl diphosphate site.

This sequence belongs to the IspH family. It depends on [4Fe-4S] cluster as a cofactor.

The enzyme catalyses isopentenyl diphosphate + 2 oxidized [2Fe-2S]-[ferredoxin] + H2O = (2E)-4-hydroxy-3-methylbut-2-enyl diphosphate + 2 reduced [2Fe-2S]-[ferredoxin] + 2 H(+). The catalysed reaction is dimethylallyl diphosphate + 2 oxidized [2Fe-2S]-[ferredoxin] + H2O = (2E)-4-hydroxy-3-methylbut-2-enyl diphosphate + 2 reduced [2Fe-2S]-[ferredoxin] + 2 H(+). It functions in the pathway isoprenoid biosynthesis; dimethylallyl diphosphate biosynthesis; dimethylallyl diphosphate from (2E)-4-hydroxy-3-methylbutenyl diphosphate: step 1/1. It participates in isoprenoid biosynthesis; isopentenyl diphosphate biosynthesis via DXP pathway; isopentenyl diphosphate from 1-deoxy-D-xylulose 5-phosphate: step 6/6. Functionally, catalyzes the conversion of 1-hydroxy-2-methyl-2-(E)-butenyl 4-diphosphate (HMBPP) into a mixture of isopentenyl diphosphate (IPP) and dimethylallyl diphosphate (DMAPP). Acts in the terminal step of the DOXP/MEP pathway for isoprenoid precursor biosynthesis. This chain is 4-hydroxy-3-methylbut-2-enyl diphosphate reductase, found in Pseudoalteromonas atlantica (strain T6c / ATCC BAA-1087).